We begin with the raw amino-acid sequence, 547 residues long: Chaperonin GroEL (547 aa).

Residues 30-33, lysine 51, 87-91, glycine 415, 479-481, and aspartate 495 contribute to the ATP site; these read TLGP, DGTTT, and NAA.

It belongs to the chaperonin (HSP60) family. As to quaternary structure, forms a cylinder of 14 subunits composed of two heptameric rings stacked back-to-back. Interacts with the co-chaperonin GroES.

It is found in the cytoplasm. The enzyme catalyses ATP + H2O + a folded polypeptide = ADP + phosphate + an unfolded polypeptide.. Together with its co-chaperonin GroES, plays an essential role in assisting protein folding. The GroEL-GroES system forms a nano-cage that allows encapsulation of the non-native substrate proteins and provides a physical environment optimized to promote and accelerate protein folding. The protein is Chaperonin GroEL of Nitratidesulfovibrio vulgaris (strain ATCC 29579 / DSM 644 / CCUG 34227 / NCIMB 8303 / VKM B-1760 / Hildenborough) (Desulfovibrio vulgaris).